The following is a 413-amino-acid chain: Peptidase T (413 aa).

Histidine 84 is a Zn(2+) binding site. Aspartate 86 is an active-site residue. Aspartate 147 provides a ligand contact to Zn(2+). Catalysis depends on glutamate 181, which acts as the Proton acceptor. Zn(2+)-binding residues include glutamate 182, aspartate 204, and histidine 386.

The protein belongs to the peptidase M20B family. It depends on Zn(2+) as a cofactor.

It is found in the cytoplasm. The enzyme catalyses Release of the N-terminal residue from a tripeptide.. Its function is as follows. Cleaves the N-terminal amino acid of tripeptides. The chain is Peptidase T from Ligilactobacillus salivarius (strain UCC118) (Lactobacillus salivarius).